Consider the following 351-residue polypeptide: Probable cobalt-factor III C(17)-methyltransferase (351 aa).

It belongs to the precorrin methyltransferase family.

The catalysed reaction is Co(II)-factor III + S-adenosyl-L-methionine + H(+) = Co(II)-factor IV + S-adenosyl-L-homocysteine. It participates in cofactor biosynthesis; adenosylcobalamin biosynthesis; cob(II)yrinate a,c-diamide from sirohydrochlorin (anaerobic route): step 3/10. Functionally, methyltransferase that likely catalyzes the ring contraction and methylation of C-17 in cobalt-factor III to form cobalt-factor IV. May also convert cobalt-precorrin-3 to cobalt-precorrin-4. This is Probable cobalt-factor III C(17)-methyltransferase (cbiH) from Methanothermobacter thermautotrophicus (strain ATCC 29096 / DSM 1053 / JCM 10044 / NBRC 100330 / Delta H) (Methanobacterium thermoautotrophicum).